A 268-amino-acid chain; its full sequence is ClpXP adapter protein SpxH (268 aa).

The protein belongs to the SpxH family. Interacts with Spx.

Its subcellular location is the cytoplasm. Adapter protein required for efficient degradation of Spx by ClpXP under non-stress conditions. Interaction with Spx stabilizes Spx and exposes the C-terminus of Spx for recognition and proteolysis by ClpXP. The chain is ClpXP adapter protein SpxH from Staphylococcus aureus (strain COL).